Reading from the N-terminus, the 284-residue chain is uncharacterized protein (284 aa).

This sequence belongs to the IIV-6 436R family.

This is an uncharacterized protein from Invertebrate iridescent virus 3 (IIV-3).